Here is a 325-residue protein sequence, read N- to C-terminus: GMP reductase (325 aa).

The active-site Thioimidate intermediate is C174. 203 to 226 is a binding site for NADP(+); that stretch reads IIADGGLRTHGDIAKSIRFGATMV.

This sequence belongs to the IMPDH/GMPR family. GuaC type 2 subfamily.

The catalysed reaction is IMP + NH4(+) + NADP(+) = GMP + NADPH + 2 H(+). Catalyzes the irreversible NADPH-dependent deamination of GMP to IMP. It functions in the conversion of nucleobase, nucleoside and nucleotide derivatives of G to A nucleotides, and in maintaining the intracellular balance of A and G nucleotides. This is GMP reductase from Staphylococcus epidermidis (strain ATCC 35984 / DSM 28319 / BCRC 17069 / CCUG 31568 / BM 3577 / RP62A).